A 274-amino-acid chain; its full sequence is uncharacterized protein (274 aa).

Belongs to the type II cytokine receptor family.

This is an uncharacterized protein from Sus scrofa (Pig).